A 185-amino-acid chain; its full sequence is MFDKEKRKKSNIIDWIKAILIALILVFLVRTFLFEPYIVQGESMKPTLFNSERLFVNKFVKYTGDFKRGDIVVLNGEEKKTHYVKRLIGLPGDTIEMKNDNLFVNGKRFNEEYLKENKKDAHDSDLNLTGDFGPIKVPKDKYFVMGDNRQNSMDSRNGLGLFNKKDIVGVEELVFFPLDRIRHAK.

At 1–14 the chain is on the cytoplasmic side; that stretch reads MFDKEKRKKSNIID. The chain crosses the membrane as a helical span at residues 15–34; sequence WIKAILIALILVFLVRTFLF. Residues 35 to 185 lie on the Extracellular side of the membrane; the sequence is EPYIVQGESM…FPLDRIRHAK (151 aa). Active-site residues include Ser-43 and Lys-85.

The protein belongs to the peptidase S26 family.

The protein localises to the cell membrane. The enzyme catalyses Cleavage of hydrophobic, N-terminal signal or leader sequences from secreted and periplasmic proteins.. The polypeptide is Signal peptidase I P (sipP) (Bacillus subtilis subsp. natto).